The following is a 617-amino-acid chain: V-type proton ATPase catalytic subunit A (617 aa).

At Thr136 the chain carries Phosphothreonine. ATP is bound at residue 250–257 (GAFGCGKT). Phosphoserine; by AMPK is present on Ser384.

This sequence belongs to the ATPase alpha/beta chains family. In terms of assembly, V-ATPase is a heteromultimeric enzyme made up of two complexes: the ATP-hydrolytic V1 complex and the proton translocation V0 complex. The V1 complex consists of three catalytic AB heterodimers that form a heterohexamer, three peripheral stalks each consisting of EG heterodimers, one central rotor including subunits D and F, and the regulatory subunits C and H. The proton translocation complex V0 consists of the proton transport subunit a, a ring of proteolipid subunits c9c'', rotary subunit d, subunits e and f, and the accessory subunits ATP6AP1/Ac45 and ATP6AP2/PRR. Interacts with the V0 complex V-ATPase subunit a4 ATP6V0A4. Interacts with WFS1. Interacts with alpha-crystallin B chain/CRYAB and with MTOR, forming a ternary complex. Phosphorylation at Ser-384 by AMPK down-regulates its enzyme activity.

The protein localises to the cytoplasm. Its subcellular location is the cytosol. It is found in the cytoplasmic vesicle. It localises to the secretory vesicle. The protein resides in the clathrin-coated vesicle membrane. The protein localises to the lysosome. The enzyme catalyses ATP + H2O + 4 H(+)(in) = ADP + phosphate + 5 H(+)(out). With respect to regulation, ATP hydrolysis occurs at the interface between the nucleotide-binding domains of subunits A and B. ATP hydrolysis triggers a conformational change in the subunits D and F, which induces a shift of subunit d. The c-ring is subsequently rotated and results in a continuous proton translocation across the membrane. Catalytic subunit of the V1 complex of vacuolar(H+)-ATPase (V-ATPase), a multisubunit enzyme composed of a peripheral complex (V1) that hydrolyzes ATP and a membrane integral complex (V0) that translocates protons. V-ATPase is responsible for acidifying and maintaining the pH of intracellular compartments and in some cell types, is targeted to the plasma membrane, where it is responsible for acidifying the extracellular environment. In aerobic conditions, involved in intracellular iron homeostasis, thus triggering the activity of Fe(2+) prolyl hydroxylase (PHD) enzymes, and leading to HIF1A hydroxylation and subsequent proteasomal degradation. May play a role in neurite development and synaptic connectivity. This chain is V-type proton ATPase catalytic subunit A (ATP6V1A), found in Sus scrofa (Pig).